The chain runs to 196 residues: ATP-dependent Clp protease proteolytic subunit (196 aa).

The active-site Nucleophile is the S98. Residue H123 is part of the active site.

This sequence belongs to the peptidase S14 family. In terms of assembly, fourteen ClpP subunits assemble into 2 heptameric rings which stack back to back to give a disk-like structure with a central cavity, resembling the structure of eukaryotic proteasomes.

The protein localises to the cytoplasm. The catalysed reaction is Hydrolysis of proteins to small peptides in the presence of ATP and magnesium. alpha-casein is the usual test substrate. In the absence of ATP, only oligopeptides shorter than five residues are hydrolyzed (such as succinyl-Leu-Tyr-|-NHMec, and Leu-Tyr-Leu-|-Tyr-Trp, in which cleavage of the -Tyr-|-Leu- and -Tyr-|-Trp bonds also occurs).. Functionally, cleaves peptides in various proteins in a process that requires ATP hydrolysis. Has a chymotrypsin-like activity. Plays a major role in the degradation of misfolded proteins. This chain is ATP-dependent Clp protease proteolytic subunit, found in Geobacillus sp. (strain WCH70).